Reading from the N-terminus, the 508-residue chain is Flavonoid 3'-monooxygenase CYP75B137 (508 aa).

A helical transmembrane segment spans residues 2-22 (LTFFFLWISTLLLSSFIVYLL). Cys445 contacts heme.

Belongs to the cytochrome P450 family. Heme serves as cofactor. As to expression, expressed in young cromes.

It is found in the membrane. The catalysed reaction is a 3'-unsubstituted flavone + reduced [NADPH--hemoprotein reductase] + O2 = a 3'-hydroxyflavone + oxidized [NADPH--hemoprotein reductase] + H2O + H(+). It catalyses the reaction (2S)-naringenin + reduced [NADPH--hemoprotein reductase] + O2 = (S)-eriodictyol + oxidized [NADPH--hemoprotein reductase] + H2O + H(+). The enzyme catalyses (2R,3R)-dihydrokaempferol + reduced [NADPH--hemoprotein reductase] + O2 = (2R,3R)-dihydroquercetin + oxidized [NADPH--hemoprotein reductase] + H2O + H(+). It carries out the reaction kaempferol + reduced [NADPH--hemoprotein reductase] + O2 = quercetin + oxidized [NADPH--hemoprotein reductase] + H2O + H(+). Its pathway is flavonoid metabolism. Flavonoid 3'-hydroxylase that catalyzes the 3'-hydroxylation of flavanones, dihydroflavonols and flavonols. Converts narigenin to eriodictyol, dihydrokaempferol to dihydroquercetin and kaempferol to quercetin. The sequence is that of Flavonoid 3'-monooxygenase CYP75B137 from Crocosmia x crocosmiiflora (Montbretia).